The chain runs to 247 residues: uncharacterized protein (247 aa).

4 to 28 serves as a coordination point for NADP(+); that stretch reads ALVTGGSRGIGRATALLLAQEGYTV. S142 is a substrate binding site. The active-site Proton acceptor is Y156.

It belongs to the short-chain dehydrogenases/reductases (SDR) family.

This is an uncharacterized protein from Escherichia coli (strain K12).